We begin with the raw amino-acid sequence, 224 residues long: Proteasome subunit beta (224 aa).

A propeptide spans 1-6 (removed in mature form; by autocatalysis); the sequence is MDVMKG. The active-site Nucleophile is the Thr7.

Belongs to the peptidase T1B family. As to quaternary structure, the 20S proteasome core is composed of 14 alpha and 14 beta subunits that assemble into four stacked heptameric rings, resulting in a barrel-shaped structure. The two inner rings, each composed of seven catalytic beta subunits, are sandwiched by two outer rings, each composed of seven alpha subunits. The catalytic chamber with the active sites is on the inside of the barrel. Has a gated structure, the ends of the cylinder being occluded by the N-termini of the alpha-subunits. Is capped at one or both ends by the proteasome regulatory ATPase, PAN.

It is found in the cytoplasm. The catalysed reaction is Cleavage of peptide bonds with very broad specificity.. With respect to regulation, the formation of the proteasomal ATPase PAN-20S proteasome complex, via the docking of the C-termini of PAN into the intersubunit pockets in the alpha-rings, triggers opening of the gate for substrate entry. Interconversion between the open-gate and close-gate conformations leads to a dynamic regulation of the 20S proteasome proteolysis activity. Component of the proteasome core, a large protease complex with broad specificity involved in protein degradation. This chain is Proteasome subunit beta, found in Methanocaldococcus fervens (strain DSM 4213 / JCM 15782 / AG86) (Methanococcus fervens).